A 124-amino-acid chain; its full sequence is ATP synthase epsilon chain (124 aa).

Residues 97–124 (ARVREASSEEEKSRAESELRAVKRSKEK) form a disordered region.

It belongs to the ATPase epsilon chain family. In terms of assembly, F-type ATPases have 2 components, CF(1) - the catalytic core - and CF(0) - the membrane proton channel. CF(1) has five subunits: alpha(3), beta(3), gamma(1), delta(1), epsilon(1). CF(0) has three main subunits: a, b and c.

The protein localises to the cell membrane. In terms of biological role, produces ATP from ADP in the presence of a proton gradient across the membrane. In Corynebacterium urealyticum (strain ATCC 43042 / DSM 7109), this protein is ATP synthase epsilon chain.